Reading from the N-terminus, the 613-residue chain is Zinc metalloproteinase-disintegrin-like MTP8 (613 aa).

The signal sequence occupies residues 1–20 (MIEVLLVTICFTVFPYQGSP). A propeptide spanning residues 21–191 (IILESGNVND…DETIEKISQL (171 aa)) is cleaved from the precursor. A Peptidase M12B domain is found at 205 to 401 (KYIELYVVVD…VRPQCILNKP (197 aa)). Position 208 (Glu-208) interacts with Ca(2+). Residue Asn-282 is glycosylated (N-linked (GlcNAc...) asparagine). Residue Asp-292 coordinates Ca(2+). 3 disulfides stabilise this stretch: Cys-316-Cys-396, Cys-356-Cys-380, and Cys-358-Cys-363. Zn(2+) contacts are provided by His-341, His-345, and His-351. 7 residues coordinate Ca(2+): Cys-396, Asn-399, Asn-414, Phe-416, Glu-418, Glu-421, and Asp-424. The Disintegrin domain occupies 409–495 (PPVCGNYFVE…KCPTDSFQRN (87 aa)). Intrachain disulfides connect Cys-412–Cys-441, Cys-423–Cys-436, Cys-425–Cys-431, Cys-435–Cys-458, Cys-449–Cys-455, Cys-454–Cys-480, Cys-467–Cys-487, Cys-474–Cys-506, Cys-499–Cys-511, Cys-518–Cys-568, Cys-533–Cys-575, Cys-543–Cys-577, Cys-546–Cys-556, Cys-563–Cys-601, and Cys-595–Cys-606. Asn-437 carries an N-linked (GlcNAc...) asparagine glycan. The short motif at 473-475 (DCD) is the D/ECD-tripeptide element. Ca(2+)-binding residues include Asp-475, Leu-476, Glu-478, and Asp-490. Asn-550 and Asn-572 each carry an N-linked (GlcNAc...) asparagine glycan.

This sequence belongs to the venom metalloproteinase (M12B) family. P-III subfamily. Monomer. It depends on Zn(2+) as a cofactor. Expressed by the venom gland.

It is found in the secreted. In terms of biological role, snake venom zinc metalloproteinase that may impair hemostasis in the prey. This is Zinc metalloproteinase-disintegrin-like MTP8 from Drysdalia coronoides (White-lipped snake).